Consider the following 392-residue polypeptide: Glutamyl-tRNA reductase (392 aa).

Substrate is bound by residues 38 to 41, serine 86, 91 to 93, and glutamine 97; these read TCNR and EDQ. The Nucleophile role is filled by cysteine 39. Position 165-170 (165-170) interacts with NADP(+); sequence GAGEMA.

Belongs to the glutamyl-tRNA reductase family. Homodimer.

It carries out the reaction (S)-4-amino-5-oxopentanoate + tRNA(Glu) + NADP(+) = L-glutamyl-tRNA(Glu) + NADPH + H(+). It functions in the pathway porphyrin-containing compound metabolism; protoporphyrin-IX biosynthesis; 5-aminolevulinate from L-glutamyl-tRNA(Glu): step 1/2. Functionally, catalyzes the NADPH-dependent reduction of glutamyl-tRNA(Glu) to glutamate 1-semialdehyde (GSA). This Methanocaldococcus jannaschii (strain ATCC 43067 / DSM 2661 / JAL-1 / JCM 10045 / NBRC 100440) (Methanococcus jannaschii) protein is Glutamyl-tRNA reductase.